The primary structure comprises 626 residues: Chaperone protein HtpG (626 aa).

Positions 1-339 (MSQNQETRGF…SNDLPLNVSR (339 aa)) are a; substrate-binding. The segment at 340–555 (EILQDNKITA…NDQMTTQMAK (216 aa)) is b. The segment at 556-626 (LFAAAGQPVP…FIKRINKLLG (71 aa)) is c.

This sequence belongs to the heat shock protein 90 family. Homodimer.

It is found in the cytoplasm. Molecular chaperone. Has ATPase activity. The chain is Chaperone protein HtpG from Haemophilus influenzae (strain PittEE).